Reading from the N-terminus, the 278-residue chain is Undecaprenyl-diphosphatase 1 (278 aa).

The next 5 helical transmembrane spans lie at 85–105 (LNVI…EKTI), 108–128 (ALFS…VILW), 188–208 (VATE…TAYE), 218–238 (VDAL…AFAC), and 254–274 (FAWY…SGAL).

This sequence belongs to the UppP family.

The protein resides in the cell inner membrane. The catalysed reaction is di-trans,octa-cis-undecaprenyl diphosphate + H2O = di-trans,octa-cis-undecaprenyl phosphate + phosphate + H(+). Its function is as follows. Catalyzes the dephosphorylation of undecaprenyl diphosphate (UPP). Confers resistance to bacitracin. The sequence is that of Undecaprenyl-diphosphatase 1 from Paraburkholderia xenovorans (strain LB400).